The sequence spans 201 residues: Large ribosomal subunit protein bL25 (201 aa).

Residues 181–201 are disordered; sequence APRESEEEAEEEATETAKESE. Residues 185-194 show a composition bias toward acidic residues; the sequence is SEEEAEEEAT.

It belongs to the bacterial ribosomal protein bL25 family. CTC subfamily. In terms of assembly, part of the 50S ribosomal subunit; part of the 5S rRNA/L5/L18/L25 subcomplex. Contacts the 5S rRNA. Binds to the 5S rRNA independently of L5 and L18.

In terms of biological role, this is one of the proteins that binds to the 5S RNA in the ribosome where it forms part of the central protuberance. In Thermoanaerobacter pseudethanolicus (strain ATCC 33223 / 39E) (Clostridium thermohydrosulfuricum), this protein is Large ribosomal subunit protein bL25.